Consider the following 269-residue polypeptide: Undecaprenyl-diphosphatase (269 aa).

The next 7 helical transmembrane spans lie at 40–59 (GITF…ALYF), 87–107 (WYII…EEPI), 116–136 (AIIA…DTLG), 160–180 (ALLP…FLGF), 188–208 (FSFL…VGHL), 220–240 (PLLI…ALLL), and 247–267 (SLYP…LFIF).

Belongs to the UppP family.

Its subcellular location is the cell inner membrane. The catalysed reaction is di-trans,octa-cis-undecaprenyl diphosphate + H2O = di-trans,octa-cis-undecaprenyl phosphate + phosphate + H(+). Functionally, catalyzes the dephosphorylation of undecaprenyl diphosphate (UPP). Confers resistance to bacitracin. The polypeptide is Undecaprenyl-diphosphatase (Geobacter metallireducens (strain ATCC 53774 / DSM 7210 / GS-15)).